The primary structure comprises 425 residues: Serine--tRNA ligase (425 aa).

Position 232–234 (232–234) interacts with L-serine; the sequence is TAE. ATP is bound by residues 263 to 265 and Val279; that span reads RRE. Glu286 is a binding site for L-serine. 350–353 provides a ligand contact to ATP; that stretch reads EVVS. L-serine is bound at residue Thr387.

This sequence belongs to the class-II aminoacyl-tRNA synthetase family. Type-1 seryl-tRNA synthetase subfamily. As to quaternary structure, homodimer. The tRNA molecule binds across the dimer.

It is found in the cytoplasm. It catalyses the reaction tRNA(Ser) + L-serine + ATP = L-seryl-tRNA(Ser) + AMP + diphosphate + H(+). The enzyme catalyses tRNA(Sec) + L-serine + ATP = L-seryl-tRNA(Sec) + AMP + diphosphate + H(+). The protein operates within aminoacyl-tRNA biosynthesis; selenocysteinyl-tRNA(Sec) biosynthesis; L-seryl-tRNA(Sec) from L-serine and tRNA(Sec): step 1/1. Its function is as follows. Catalyzes the attachment of serine to tRNA(Ser). Is also able to aminoacylate tRNA(Sec) with serine, to form the misacylated tRNA L-seryl-tRNA(Sec), which will be further converted into selenocysteinyl-tRNA(Sec). The protein is Serine--tRNA ligase of Methanocorpusculum labreanum (strain ATCC 43576 / DSM 4855 / Z).